We begin with the raw amino-acid sequence, 84 residues long: Cell division topological specificity factor (84 aa).

Belongs to the MinE family.

Prevents the cell division inhibition by proteins MinC and MinD at internal division sites while permitting inhibition at polar sites. This ensures cell division at the proper site by restricting the formation of a division septum at the midpoint of the long axis of the cell. In Pseudomonas syringae pv. syringae (strain B728a), this protein is Cell division topological specificity factor.